Here is a 246-residue protein sequence, read N- to C-terminus: Carbonic anhydrase (246 aa).

Residues 1–22 (MKTSLGKAALLALSMMPVTVFA) form the signal peptide. The Alpha-carbonic anhydrase domain maps to 23–246 (SHWSYEGEGS…QPLNGRVVIE (224 aa)). Cys-46 and Cys-201 are disulfide-bonded. His-84 acts as the Proton acceptor in catalysis. Residues His-111, His-113, and His-130 each contribute to the Zn(2+) site. Position 197–198 (197–198 (TT)) interacts with substrate.

It belongs to the alpha-carbonic anhydrase family. Zn(2+) serves as cofactor.

Its subcellular location is the periplasm. It carries out the reaction hydrogencarbonate + H(+) = CO2 + H2O. Functionally, reversible hydration of carbon dioxide. The protein is Carbonic anhydrase (cah) of Klebsiella pneumoniae.